The following is a 166-amino-acid chain: NAD(P)H-quinone oxidoreductase subunit I, chloroplastic (166 aa).

4Fe-4S ferredoxin-type domains follow at residues 55–84 (GRIH…VDWK) and 95–124 (LNYS…MTEE). [4Fe-4S] cluster is bound by residues cysteine 64, cysteine 67, cysteine 70, cysteine 74, cysteine 104, cysteine 107, cysteine 110, and cysteine 114.

This sequence belongs to the complex I 23 kDa subunit family. As to quaternary structure, NDH is composed of at least 16 different subunits, 5 of which are encoded in the nucleus. [4Fe-4S] cluster serves as cofactor.

The protein resides in the plastid. Its subcellular location is the chloroplast thylakoid membrane. It catalyses the reaction a plastoquinone + NADH + (n+1) H(+)(in) = a plastoquinol + NAD(+) + n H(+)(out). It carries out the reaction a plastoquinone + NADPH + (n+1) H(+)(in) = a plastoquinol + NADP(+) + n H(+)(out). NDH shuttles electrons from NAD(P)H:plastoquinone, via FMN and iron-sulfur (Fe-S) centers, to quinones in the photosynthetic chain and possibly in a chloroplast respiratory chain. The immediate electron acceptor for the enzyme in this species is believed to be plastoquinone. Couples the redox reaction to proton translocation, and thus conserves the redox energy in a proton gradient. The protein is NAD(P)H-quinone oxidoreductase subunit I, chloroplastic of Hulsea algida (Pacific hulsea).